Reading from the N-terminus, the 109-residue chain is MTNLLNKSLEENGSFLTAVYIFVGFVALYLLGRALQAFVQAADACCLFWYTWVVVPGAKGTAFVYNHTYGKKLNKPELEAVVVNEFPKNGWNNKNPANFQDVQRNKLYS.

Residues 1 to 11 lie on the Virion surface side of the membrane; it reads MTNLLNKSLEE. Residues 12-32 traverse the membrane as a helical segment; the sequence is NGSFLTAVYIFVGFVALYLLG. Over 33-109 the chain is Intravirion; that stretch reads RALQAFVQAA…QDVQRNKLYS (77 aa). A disordered region spans residues 89-109; the sequence is NGWNNKNPANFQDVQRNKLYS. Over residues 90–109 the composition is skewed to polar residues; the sequence is GWNNKNPANFQDVQRNKLYS.

The protein belongs to the gammacoronaviruses E protein family. As to quaternary structure, homooligomer. Interacts with the M membrane protein in the budding compartment of the host cell, which is located between endoplasmic reticulum and the Golgi complex. The cytoplasmic tails of both proteins are important for this function. Interacts with Nucleoprotein.

Its subcellular location is the host Golgi apparatus membrane. Functionally, plays a central role in virus morphogenesis and assembly. Acts as a viroporin and self-assembles in host membranes forming pentameric protein-lipid pores that allow ion transport. Also plays a role in the induction of apoptosis. The polypeptide is Envelope small membrane protein (Avian infectious bronchitis virus (strain KB8523) (IBV)).